The chain runs to 136 residues: MARLFVVVALLALAVGTVFAADAPSAAPTASPTKSPTKAPAAAPKSSAAAPKASSPVAEEPTPEDDYSAASPSDSAEAPTVSSPPAPTPEADGPSSDGPSSDGPAAAESPKSGATTNVKLSIAGTVAAAGFFIFSL.

The N-terminal stretch at 1–20 (MARLFVVVALLALAVGTVFA) is a signal peptide. Composition is skewed to low complexity over residues 24-56 (PSAA…ASSP), 68-81 (SAAS…APTV), and 89-107 (PEAD…PAAA). The segment at 24-115 (PSAAPTASPT…AAESPKSGAT (92 aa)) is disordered. Residue Ser-112 is the site of GPI-anchor amidated serine attachment. A propeptide spans 113-136 (GATTNVKLSIAGTVAAAGFFIFSL) (removed in mature form).

It belongs to the classical AGP family. Post-translationally, O-glycosylated on the hydroxyproline residues.

Its subcellular location is the cell membrane. Functionally, proteoglycan that seems to be implicated in diverse developmental roles such as differentiation, cell-cell recognition, embryogenesis and programmed cell death. This chain is Classical arabinogalactan protein 11 (AGP11), found in Arabidopsis thaliana (Mouse-ear cress).